Reading from the N-terminus, the 493-residue chain is Glutamate synthase [NADPH] small chain (493 aa).

Residue 299–313 (GGGDTGADCVATALR) coordinates NADP(+).

Belongs to the glutamate synthase family. Aggregate of 4 catalytic active heterodimers, consisting of a large and a small subunit.

It catalyses the reaction 2 L-glutamate + NADP(+) = L-glutamine + 2-oxoglutarate + NADPH + H(+). The protein operates within amino-acid biosynthesis; L-glutamate biosynthesis via GLT pathway; L-glutamate from 2-oxoglutarate and L-glutamine (NADP(+) route): step 1/1. It functions in the pathway energy metabolism; nitrogen metabolism. In Bacillus subtilis (strain 168), this protein is Glutamate synthase [NADPH] small chain (gltB).